Reading from the N-terminus, the 505-residue chain is MADFVGAVDQGTTSTRFMIFDHAGNEVAKHQLEHAQILPRSGWVEHDPVEIWERTNSVIQNALRHGNLSPDDLAAIGITNQRETTVVWDPRNGRPYYNAIVWQDTRTDSIAAALERSGQGDVIRRKAGLPPATYFSGGKIQWILENVDGVREAAEQGHAVFGNTDCWVLWNLTGGPDGGIHATDVTNASRTMLMDLETLDWDDELLGLFDIPRSMLPTINPSSHPEAYGQTRTSRPLRAAIPIAGVLGDQQAATVGQVCYAPGEAKNTYGTGNFLVLNTGTELVRSQHGLLTTVAYQFGDSPAIYALEGSIAVTGSAVQWLRDQMKIIKSAAESETLARTVEDNGGIYFVPAFSGLFAPYWRSDARGAIVGLARYHDNGHLARATLEAICYQSRDVVEAMEQDSGVHLDVLKVDGGVTANDLCMQIQADILGVPVSRPVVAETTALGAAYAAGLATGFWQDTDELRTHWQESKRWEPQWSEDRRAEGYAGWKKAVERTLDWSKVE.

An ADP-binding site is contributed by Thr-12. 3 residues coordinate ATP: Thr-12, Thr-13, and Ser-14. Thr-12 serves as a coordination point for sn-glycerol 3-phosphate. Arg-16 contacts ADP. Sn-glycerol 3-phosphate is bound by residues Arg-82, Glu-83, Tyr-134, and Asp-249. Glycerol contacts are provided by Arg-82, Glu-83, Tyr-134, Asp-249, and Gln-250. ADP-binding residues include Thr-271 and Gly-315. ATP is bound by residues Thr-271, Gly-315, Gln-319, and Gly-416. ADP-binding residues include Gly-416 and Asn-420.

It belongs to the FGGY kinase family.

It carries out the reaction glycerol + ATP = sn-glycerol 3-phosphate + ADP + H(+). It participates in polyol metabolism; glycerol degradation via glycerol kinase pathway; sn-glycerol 3-phosphate from glycerol: step 1/1. With respect to regulation, inhibited by fructose 1,6-bisphosphate (FBP). Its function is as follows. Key enzyme in the regulation of glycerol uptake and metabolism. Catalyzes the phosphorylation of glycerol to yield sn-glycerol 3-phosphate. The chain is Glycerol kinase 3 from Streptomyces avermitilis (strain ATCC 31267 / DSM 46492 / JCM 5070 / NBRC 14893 / NCIMB 12804 / NRRL 8165 / MA-4680).